We begin with the raw amino-acid sequence, 874 residues long: Rho GTPase-activating protein 42 (874 aa).

A BAR domain is found at Glu-7–Pro-262. Positions Lys-225–Arg-261 form a coiled coil. The region spanning Gln-265–Pro-374 is the PH domain. Tyr-376 is subject to Phosphotyrosine. Residues Tyr-376–Phe-572 form the Rho-GAP domain. A disordered region spans residues Ala-575–Val-720. Residues Asp-620–Ser-650 are compositionally biased toward low complexity. Residues Thr-667 to Ser-686 show a composition bias toward polar residues. Position 683 is a phosphoserine (Ser-683). The segment covering Ser-687–Ala-697 has biased composition (basic and acidic residues). Residues Asp-700–Gly-711 show a composition bias toward polar residues. Phosphoserine is present on residues Ser-740, Ser-753, Ser-756, and Ser-811. Residues Ser-749 to Ser-762 are compositionally biased toward polar residues. The interval Ser-749–Lys-777 is disordered. The SH3 domain maps to Ser-816–Leu-874. Residue Tyr-870 is modified to Phosphotyrosine.

In terms of tissue distribution, highly and selectively expressed in smooth muscle cells.

In terms of biological role, may influence blood pressure by functioning as a GTPase-activating protein for RHOA in vascular smooth muscle. This chain is Rho GTPase-activating protein 42, found in Homo sapiens (Human).